Consider the following 293-residue polypeptide: Nucleotide-binding protein BcerKBAB4_4948 (293 aa).

Position 14–21 (14–21 (GMSGAGKT)) interacts with ATP. 65–68 (DLRG) is a GTP binding site.

It belongs to the RapZ-like family.

Its function is as follows. Displays ATPase and GTPase activities. This chain is Nucleotide-binding protein BcerKBAB4_4948, found in Bacillus mycoides (strain KBAB4) (Bacillus weihenstephanensis).